A 372-amino-acid polypeptide reads, in one-letter code: Spermidine/putrescine import ATP-binding protein PotA (372 aa).

One can recognise an ABC transporter domain in the interval 11–241 (IELRSITKSY…PANLFVARFI (231 aa)). 43 to 50 (GPSGCGKT) is a binding site for ATP.

It belongs to the ABC transporter superfamily. Spermidine/putrescine importer (TC 3.A.1.11.1) family. The complex is composed of two ATP-binding proteins (PotA), two transmembrane proteins (PotB and PotC) and a solute-binding protein (PotD).

It is found in the cell inner membrane. The catalysed reaction is ATP + H2O + polyamine-[polyamine-binding protein]Side 1 = ADP + phosphate + polyamineSide 2 + [polyamine-binding protein]Side 1.. In terms of biological role, part of the ABC transporter complex PotABCD involved in spermidine/putrescine import. Responsible for energy coupling to the transport system. This chain is Spermidine/putrescine import ATP-binding protein PotA, found in Aggregatibacter actinomycetemcomitans (Actinobacillus actinomycetemcomitans).